Reading from the N-terminus, the 441-residue chain is COBRA-like protein 2 (441 aa).

A signal peptide spans M1 to A28. N-linked (GlcNAc...) asparagine glycosylation is found at N37, N162, N170, N209, N234, N249, N314, N329, and N348. N417 carries GPI-anchor amidated asparagine lipidation. The propeptide at A418–M441 is removed in mature form.

The protein belongs to the COBRA family. In terms of tissue distribution, expressed in roots, stems, leaves, flowers and siliques.

It localises to the cell membrane. The sequence is that of COBRA-like protein 2 (COBL2) from Arabidopsis thaliana (Mouse-ear cress).